The primary structure comprises 478 residues: Deoxyribodipyrimidine photo-lyase (478 aa).

The region spanning 2-136 (NVNLMWFRND…IINCFHDSVL (135 aa)) is the Photolyase/cryptochrome alpha/beta domain. (6R)-5,10-methylene-5,6,7,8-tetrahydrofolate is bound at residue E110. Residues Y227 and 239 to 243 (TSMLS) each bind FAD. Interaction with DNA stretches follow at residues 279–286 (ELLWREFY) and 346–347 (NR). An FAD-binding site is contributed by 377-379 (DGD). DNA is bound at residue Q409.

It belongs to the DNA photolyase class-1 family. As to quaternary structure, monomer. FAD serves as cofactor. (6R)-5,10-methylene-5,6,7,8-tetrahydrofolate is required as a cofactor.

It catalyses the reaction cyclobutadipyrimidine (in DNA) = 2 pyrimidine residues (in DNA).. Its function is as follows. Involved in repair of UV radiation-induced DNA damage. Catalyzes the light-dependent monomerization (300-600 nm) of cyclobutyl pyrimidine dimers (in cis-syn configuration), which are formed between adjacent bases on the same DNA strand upon exposure to ultraviolet radiation. This Buchnera aphidicola subsp. Baizongia pistaciae (strain Bp) protein is Deoxyribodipyrimidine photo-lyase (phrB).